A 445-amino-acid chain; its full sequence is Arginine/agmatine antiporter (445 aa).

Residues methionine 1–leucine 12 are Cytoplasmic-facing. A helical membrane pass occupies residues isoleucine 13–methionine 24. Positions 23, 26, and 27 each coordinate L-arginine. The Helix-breaking GSG motif TM1 motif lies at glycine 25–glycine 27. The Periplasmic portion of the chain corresponds to glycine 25 to alanine 42. The chain crosses the membrane as a helical span at residues isoleucine 43–alanine 61. Over lysine 62 to glycine 86 the chain is Cytoplasmic. Residues tyrosine 87–leucine 112 traverse the membrane as a helical segment. Residues alanine 96, cysteine 97, and asparagine 101 each contribute to the L-arginine site. The Periplasmic segment spans residues serine 113 to valine 124. Residues leucine 125 to valine 142 traverse the membrane as a helical segment. Position 143 (glycine 143) is a topological domain, cytoplasmic. Residues proline 144 to phenylalanine 171 traverse the membrane as a helical segment. Residues tryptophan 172–glutamine 194 are Periplasmic-facing. A helical transmembrane segment spans residues serine 195–valine 207. L-arginine is bound by residues tryptophan 202 and isoleucine 205. The Helix-breaking GVESA motif TM6 signature appears at glycine 206 to alanine 210. Residues glutamate 208 to isoleucine 226 lie on the Cytoplasmic side of the membrane. The chain crosses the membrane as a helical span at residues alanine 227–methionine 247. Residues glycine 248 to isoleucine 277 lie on the Periplasmic side of the membrane. Residues valine 278–alanine 301 traverse the membrane as a helical segment. Tryptophan 293 is an L-arginine binding site. The Cytoplasmic portion of the chain corresponds to lysine 302–proline 323. Residues valine 324 to serine 340 traverse the membrane as a helical segment. The Periplasmic segment spans residues serine 341–leucine 352. Residues valine 353–alanine 370 form a helical membrane-spanning segment. Serine 357 contributes to the L-arginine binding site. The Cytoplasmic portion of the chain corresponds to alanine 371–leucine 388. Residues alanine 389–glycine 404 form a helical membrane-spanning segment. Residues serine 405–alanine 407 lie on the Periplasmic side of the membrane. Residues lysine 408–leucine 426 traverse the membrane as a helical segment. Topologically, residues asparagine 427–aspartate 445 are cytoplasmic.

Belongs to the amino acid-polyamine-organocation (APC) superfamily. Basic amino acid/polyamine antiporter (APA) (TC 2.A.3.2) family. As to quaternary structure, homodimer;each subunit has its own individual transport capacity.

Its subcellular location is the cell inner membrane. It carries out the reaction agmatine(in) + L-arginine(out) = agmatine(out) + L-arginine(in). In terms of biological role, major component of the acid-resistance (AR) system allowing enteric pathogens to survive the acidic environment in the stomach. Exchanges extracellular arginine for its intracellular decarboxylation product agmatine (Agm) thereby expelling intracellular protons. Probably undergoes several conformational states in order to translocate the substrate across the membrane; keeps the substrate accessible to only 1 side of the membrane at a time by opening and closing 3 membrane-internal gates. This is Arginine/agmatine antiporter (adiC) from Escherichia coli O157:H7.